The primary structure comprises 63 residues: MSRKCEICGKGPSFGNNVSHANNKTRTTWYPNLQKVKAVRNGSVQTIKVCTRCIRSGHVTKAI.

This sequence belongs to the bacterial ribosomal protein bL28 family.

The chain is Large ribosomal subunit protein bL28 from Geobacter metallireducens (strain ATCC 53774 / DSM 7210 / GS-15).